The following is a 580-amino-acid chain: E3 ubiquitin-protein ligase TRIM45 (580 aa).

The segment at 29 to 98 adopts an RING-type zinc-finger fold; that stretch reads CPTCLRLFKV…QIGILCPVCD (70 aa). 2 consecutive B box-type zinc fingers follow at residues 130-176 and 186-227; these read GQGL…MVDL and GKPI…YDFT. Zn(2+) contacts are provided by C135, C138, C158, H162, C191, H194, C214, and H219. Positions 249–329 form a coiled coil; that stretch reads VEALEDALAQ…LLADMRTGVE (81 aa). The stretch at 394-497 is one Filamin repeat; it reads TQEVDPAQCV…VQGSPFNVTV (104 aa).

This sequence belongs to the TRIM/RBCC family.

The protein resides in the cytoplasm. Its subcellular location is the nucleus. The catalysed reaction is S-ubiquitinyl-[E2 ubiquitin-conjugating enzyme]-L-cysteine + [acceptor protein]-L-lysine = [E2 ubiquitin-conjugating enzyme]-L-cysteine + N(6)-ubiquitinyl-[acceptor protein]-L-lysine.. Functionally, E3 ubiquitin-protein ligase that plays a role in the regulation of inflammatory response. Mechanistically, mediates the 'Lys-48'-linked polyubiquitination of TAB2, a regulatory protein of the kinase TAK1, leading to its degradation via the proteasomal pathway and inhibition of the TLR-mediated inflammatory immune response. May act as a transcriptional repressor in mitogen-activated protein kinase signaling pathway. This is E3 ubiquitin-protein ligase TRIM45 (Trim45) from Mus musculus (Mouse).